Here is a 657-residue protein sequence, read N- to C-terminus: Glycogen debranching enzyme (657 aa).

Catalysis depends on Asp336, which acts as the Nucleophile. Glu371 functions as the Proton donor in the catalytic mechanism. Residues 460–479 (ANGEENRDGTNNNYSNNHGK) form a disordered region.

The protein belongs to the glycosyl hydrolase 13 family.

The catalysed reaction is Hydrolysis of (1-&gt;6)-alpha-D-glucosidic linkages to branches with degrees of polymerization of three or four glucose residues in limit dextrin.. It participates in glycan degradation; glycogen degradation. Removes maltotriose and maltotetraose chains that are attached by 1,6-alpha-linkage to the limit dextrin main chain, generating a debranched limit dextrin. The sequence is that of Glycogen debranching enzyme from Shigella flexneri serotype 5b (strain 8401).